Consider the following 361-residue polypeptide: Phosphoserine aminotransferase (361 aa).

Residues serine 9 and arginine 42 each coordinate L-glutamate. Pyridoxal 5'-phosphate contacts are provided by residues 76–77 (AR), tryptophan 102, threonine 153, aspartate 173, and glutamine 196. An N6-(pyridoxal phosphate)lysine modification is found at lysine 197. A pyridoxal 5'-phosphate-binding site is contributed by 238-239 (NT).

Belongs to the class-V pyridoxal-phosphate-dependent aminotransferase family. SerC subfamily. In terms of assembly, homodimer. Pyridoxal 5'-phosphate serves as cofactor.

The protein localises to the cytoplasm. The enzyme catalyses O-phospho-L-serine + 2-oxoglutarate = 3-phosphooxypyruvate + L-glutamate. It catalyses the reaction 4-(phosphooxy)-L-threonine + 2-oxoglutarate = (R)-3-hydroxy-2-oxo-4-phosphooxybutanoate + L-glutamate. It participates in amino-acid biosynthesis; L-serine biosynthesis; L-serine from 3-phospho-D-glycerate: step 2/3. It functions in the pathway cofactor biosynthesis; pyridoxine 5'-phosphate biosynthesis; pyridoxine 5'-phosphate from D-erythrose 4-phosphate: step 3/5. Functionally, catalyzes the reversible conversion of 3-phosphohydroxypyruvate to phosphoserine and of 3-hydroxy-2-oxo-4-phosphonooxybutanoate to phosphohydroxythreonine. The chain is Phosphoserine aminotransferase from Serratia proteamaculans (strain 568).